The sequence spans 370 residues: Anthranilate phosphoribosyltransferase (370 aa).

The interval 1 to 27 is disordered; it reads MALSAEGSSGGSRGGSPKAEAASVPSW. Residues Gly-107, 110–111, Thr-115, 117–120, 135–143, and Gly-147 each bind 5-phospho-alpha-D-ribose 1-diphosphate; these read GD, NLST, and KHGNRAASS. Gly-107 lines the anthranilate pocket. Ser-119 is a binding site for Mg(2+). Asn-138 serves as a coordination point for anthranilate. An anthranilate-binding site is contributed by Arg-193. Mg(2+)-binding residues include Asp-251 and Glu-252.

This sequence belongs to the anthranilate phosphoribosyltransferase family. In terms of assembly, homodimer. Requires Mg(2+) as cofactor.

It catalyses the reaction N-(5-phospho-beta-D-ribosyl)anthranilate + diphosphate = 5-phospho-alpha-D-ribose 1-diphosphate + anthranilate. Its pathway is amino-acid biosynthesis; L-tryptophan biosynthesis; L-tryptophan from chorismate: step 2/5. In terms of biological role, catalyzes the transfer of the phosphoribosyl group of 5-phosphorylribose-1-pyrophosphate (PRPP) to anthranilate to yield N-(5'-phosphoribosyl)-anthranilate (PRA). This Mycobacterium bovis (strain ATCC BAA-935 / AF2122/97) protein is Anthranilate phosphoribosyltransferase.